The primary structure comprises 31 residues: U6-ctenitoxin-Co1a (31 aa).

Intrachain disulfides connect cysteine 2–cysteine 18 and cysteine 9–cysteine 23.

As to expression, expressed by the venom gland.

It localises to the secreted. Antagonist of L-type calcium channels (Cav1/CACNA1). This Ctenus ornatus (Brazilian spider) protein is U6-ctenitoxin-Co1a.